The sequence spans 142 residues: Large ribosomal subunit protein uL13 (142 aa).

This sequence belongs to the universal ribosomal protein uL13 family. As to quaternary structure, part of the 50S ribosomal subunit.

In terms of biological role, this protein is one of the early assembly proteins of the 50S ribosomal subunit, although it is not seen to bind rRNA by itself. It is important during the early stages of 50S assembly. In Syntrophus aciditrophicus (strain SB), this protein is Large ribosomal subunit protein uL13.